Consider the following 76-residue polypeptide: MAVEKFETALKKLEDVVRKLEGGDLSLDDSLKAFEEGVKMASFCTKKLDEAEKKVELLLKKKDGTFVREDFRLDDE.

It belongs to the XseB family. In terms of assembly, heterooligomer composed of large and small subunits.

Its subcellular location is the cytoplasm. The enzyme catalyses Exonucleolytic cleavage in either 5'- to 3'- or 3'- to 5'-direction to yield nucleoside 5'-phosphates.. Bidirectionally degrades single-stranded DNA into large acid-insoluble oligonucleotides, which are then degraded further into small acid-soluble oligonucleotides. The chain is Exodeoxyribonuclease 7 small subunit from Geobacter sulfurreducens (strain ATCC 51573 / DSM 12127 / PCA).